The sequence spans 365 residues: Cobalt-precorrin-5B C(1)-methyltransferase (365 aa).

This sequence belongs to the CbiD family.

The enzyme catalyses Co-precorrin-5B + S-adenosyl-L-methionine = Co-precorrin-6A + S-adenosyl-L-homocysteine. Its pathway is cofactor biosynthesis; adenosylcobalamin biosynthesis; cob(II)yrinate a,c-diamide from sirohydrochlorin (anaerobic route): step 6/10. Its function is as follows. Catalyzes the methylation of C-1 in cobalt-precorrin-5B to form cobalt-precorrin-6A. This is Cobalt-precorrin-5B C(1)-methyltransferase from Pseudomonas fluorescens (strain ATCC BAA-477 / NRRL B-23932 / Pf-5).